The sequence spans 286 residues: Beta-glucanase (286 aa).

The signal sequence occupies residues Met-1–Gly-30. One can recognise a GH16 domain in the interval Phe-48 to Glu-286. The active-site Nucleophile is Glu-158. Glu-163 acts as the Proton donor in catalysis.

This sequence belongs to the glycosyl hydrolase 16 family.

The catalysed reaction is Hydrolysis of (1-&gt;4)-beta-D-glucosidic linkages in beta-D-glucans containing (1-&gt;3)- and (1-&gt;4)-bonds.. Shows activity on lichenan, beta-glucan and laminarin but not on CMC cellulose or xylan. The sequence is that of Beta-glucanase (bglA) from Rhodothermus marinus (Rhodothermus obamensis).